Reading from the N-terminus, the 411-residue chain is Na(+)-translocating NADH-quinone reductase subunit F (411 aa).

Residues 5 to 25 (VILALGIAAFTVIVLVLVAII) form a helical membrane-spanning segment. Residues 36 to 130 (GDITIGINDD…NMEVELPEEI (95 aa)) form the 2Fe-2S ferredoxin-type domain. [2Fe-2S] cluster-binding residues include Cys-73, Cys-79, Cys-82, and Cys-114. The FAD-binding FR-type domain maps to 133-273 (VKKWECTVIS…SGPFGEFFAK (141 aa)).

Belongs to the NqrF family. In terms of assembly, composed of six subunits; NqrA, NqrB, NqrC, NqrD, NqrE and NqrF. The cofactor is [2Fe-2S] cluster. Requires FAD as cofactor.

It localises to the cell inner membrane. The enzyme catalyses a ubiquinone + n Na(+)(in) + NADH + H(+) = a ubiquinol + n Na(+)(out) + NAD(+). Functionally, NQR complex catalyzes the reduction of ubiquinone-1 to ubiquinol by two successive reactions, coupled with the transport of Na(+) ions from the cytoplasm to the periplasm. The first step is catalyzed by NqrF, which accepts electrons from NADH and reduces ubiquinone-1 to ubisemiquinone by a one-electron transfer pathway. The sequence is that of Na(+)-translocating NADH-quinone reductase subunit F from Haemophilus influenzae (strain PittEE).